Reading from the N-terminus, the 397-residue chain is MAKEKFDRSLPHVNVGTIGHVDHGKTTLTAALTRVCSEVFGSAAVEFDKIDSAPEEKARGITINTAHVEYKSLIRHYAHVDCPGHADYVKNMITGAAQMDGAILVCSAADGPMPQTREHILLSRQVGVPYIVVFLNKADLVDDAELLELVEMEVRDLLSTYDFPGDDTPIIIGSARMALEGKDDNEMGTTAVRKLVETLDSYIPEPVRVTDKPFLMPIEDVFSISGRGTVVTGRIERGIVKVQDPLEIVGLRDTTVTTCTGVEMFRKLLDEGRAGENCGVLLRGTKRDDVERGQVLVKPGSVKPHTQFEAEIYVLSKEEGGRHTPFFKGYRPQFYFRTTDVTGSCELPEGVEMVMPGDNVKVSVTLIKPIAMEDGLRFAIREGGRTVGAGVVAKIIA.

Residues 10–207 (LPHVNVGTIG…TLDSYIPEPV (198 aa)) form the tr-type G domain. The G1 stretch occupies residues 19-26 (GHVDHGKT). 19-26 (GHVDHGKT) serves as a coordination point for GTP. Thr-26 provides a ligand contact to Mg(2+). The tract at residues 60–64 (GITIN) is G2. Residues 81 to 84 (DCPG) are G3. GTP-binding positions include 81–85 (DCPGH) and 136–139 (NKAD). A G4 region spans residues 136-139 (NKAD). The tract at residues 174-176 (SAR) is G5.

It belongs to the TRAFAC class translation factor GTPase superfamily. Classic translation factor GTPase family. EF-Tu/EF-1A subfamily. As to quaternary structure, monomer.

It is found in the cytoplasm. The enzyme catalyses GTP + H2O = GDP + phosphate + H(+). In terms of biological role, GTP hydrolase that promotes the GTP-dependent binding of aminoacyl-tRNA to the A-site of ribosomes during protein biosynthesis. The chain is Elongation factor Tu from Pseudomonas syringae pv. syringae (strain B728a).